We begin with the raw amino-acid sequence, 355 residues long: Cytoplasmic tRNA 2-thiolation protein 1 (355 aa).

The disordered stretch occupies residues 320–341 (GIGRPRGVNGDHNKETKKPGSV). A compositionally biased stretch (basic and acidic residues) spans 328–337 (NGDHNKETKK).

Belongs to the TtcA family. CTU1/NCS6/ATPBD3 subfamily.

Its subcellular location is the cytoplasm. Its pathway is tRNA modification; 5-methoxycarbonylmethyl-2-thiouridine-tRNA biosynthesis. Plays a central role in 2-thiolation of mcm(5)S(2)U at tRNA wobble positions of tRNA(Lys), tRNA(Glu) and tRNA(Gln). Directly binds tRNAs and probably acts by catalyzing adenylation of tRNAs, an intermediate required for 2-thiolation. It is unclear whether it acts as a sulfurtransferase that transfers sulfur from thiocarboxylated URM1 onto the uridine of tRNAs at wobble position. The polypeptide is Cytoplasmic tRNA 2-thiolation protein 1 (Arabidopsis thaliana (Mouse-ear cress)).